Reading from the N-terminus, the 163-residue chain is Crossover junction endodeoxyribonuclease RuvC (163 aa).

Residues Asp9, Glu76, and Asp148 contribute to the active site. Mg(2+) is bound by residues Asp9, Glu76, and Asp148.

This sequence belongs to the RuvC family. Homodimer which binds Holliday junction (HJ) DNA. The HJ becomes 2-fold symmetrical on binding to RuvC with unstacked arms; it has a different conformation from HJ DNA in complex with RuvA. In the full resolvosome a probable DNA-RuvA(4)-RuvB(12)-RuvC(2) complex forms which resolves the HJ. The cofactor is Mg(2+).

Its subcellular location is the cytoplasm. It catalyses the reaction Endonucleolytic cleavage at a junction such as a reciprocal single-stranded crossover between two homologous DNA duplexes (Holliday junction).. Functionally, the RuvA-RuvB-RuvC complex processes Holliday junction (HJ) DNA during genetic recombination and DNA repair. Endonuclease that resolves HJ intermediates. Cleaves cruciform DNA by making single-stranded nicks across the HJ at symmetrical positions within the homologous arms, yielding a 5'-phosphate and a 3'-hydroxyl group; requires a central core of homology in the junction. The consensus cleavage sequence is 5'-(A/T)TT(C/G)-3'. Cleavage occurs on the 3'-side of the TT dinucleotide at the point of strand exchange. HJ branch migration catalyzed by RuvA-RuvB allows RuvC to scan DNA until it finds its consensus sequence, where it cleaves and resolves the cruciform DNA. This is Crossover junction endodeoxyribonuclease RuvC from Nostoc punctiforme (strain ATCC 29133 / PCC 73102).